A 270-amino-acid polypeptide reads, in one-letter code: S-methyl-5'-thioadenosine phosphorylase (270 aa).

Phosphate is bound by residues Ser-16, 58–59 (RH), and 91–92 (SA). 3 disulfides stabilise this stretch: Cys-138-Cys-205, Cys-200-Cys-262, and Cys-259-Cys-261. Met-190 lines the substrate pocket. A phosphate-binding site is contributed by Thr-191. 214–216 (DYD) is a binding site for substrate.

This sequence belongs to the PNP/MTAP phosphorylase family. MTAP subfamily. In terms of assembly, homohexamer. Dimer of a homotrimer.

It carries out the reaction S-methyl-5'-thioadenosine + phosphate = 5-(methylsulfanyl)-alpha-D-ribose 1-phosphate + adenine. Its pathway is amino-acid biosynthesis; L-methionine biosynthesis via salvage pathway; S-methyl-5-thio-alpha-D-ribose 1-phosphate from S-methyl-5'-thioadenosine (phosphorylase route): step 1/1. In terms of biological role, catalyzes the reversible phosphorylation of S-methyl-5'-thioadenosine (MTA) to adenine and 5-methylthioribose-1-phosphate. Involved in the breakdown of MTA, a major by-product of polyamine biosynthesis. Responsible for the first step in the methionine salvage pathway after MTA has been generated from S-adenosylmethionine. Has broad substrate specificity with 6-aminopurine nucleosides as preferred substrates. The sequence is that of S-methyl-5'-thioadenosine phosphorylase from Saccharolobus solfataricus (strain ATCC 35092 / DSM 1617 / JCM 11322 / P2) (Sulfolobus solfataricus).